Reading from the N-terminus, the 219-residue chain is Orotate phosphoribosyltransferase (219 aa).

Lys26 is a binding site for 5-phospho-alpha-D-ribose 1-diphosphate. 34 to 35 (FF) provides a ligand contact to orotate. Residues 72–73 (YK), Arg98, Lys99, Lys102, His104, and 124–132 (DDVITAGTA) each bind 5-phospho-alpha-D-ribose 1-diphosphate. 2 residues coordinate orotate: Thr128 and Arg156.

It belongs to the purine/pyrimidine phosphoribosyltransferase family. PyrE subfamily. In terms of assembly, homodimer. It depends on Mg(2+) as a cofactor.

The enzyme catalyses orotidine 5'-phosphate + diphosphate = orotate + 5-phospho-alpha-D-ribose 1-diphosphate. It participates in pyrimidine metabolism; UMP biosynthesis via de novo pathway; UMP from orotate: step 1/2. Functionally, catalyzes the transfer of a ribosyl phosphate group from 5-phosphoribose 1-diphosphate to orotate, leading to the formation of orotidine monophosphate (OMP). This is Orotate phosphoribosyltransferase from Xanthomonas campestris pv. campestris (strain 8004).